A 536-amino-acid chain; its full sequence is Probable monofunctional riboflavin biosynthesis protein RIBA 3, chloroplastic (536 aa).

The N-terminal 43 residues, 1–43 (MDRVLLSSQLSSQTVVNTRVQQGSGGINSIGFAVIRKGSLKLR), are a transit peptide targeting the chloroplast. Residues 44-310 (CYAIGGLGGG…IADLIRYRRK (267 aa)) are inactive DHBP synthase. D-ribulose 5-phosphate is bound by residues 133–134 (GD), D138, and 248–252 (RAGHT). The segment at 311-536 (REKLVELIAV…GDQDEDDTHN (226 aa)) is GTP cyclohydrolase II. GTP is bound at residue 361–365 (RVHSE). C366, C377, and C379 together coordinate Zn(2+). Residues Q382, 405–407 (EGR), and T427 each bind GTP. D439 (proton acceptor; for GTP cyclohydrolase activity) is an active-site residue. Residue R441 is the Nucleophile; for GTP cyclohydrolase activity of the active site. The GTP site is built by T462 and K467. Residues 507–536 (YGSDLPGNVPEEFLNPDDIAGDQDEDDTHN) form a disordered region. Over residues 525-536 (IAGDQDEDDTHN) the composition is skewed to acidic residues.

The protein in the N-terminal section; belongs to the DHBP synthase family. This sequence in the C-terminal section; belongs to the GTP cyclohydrolase II family. Zn(2+) serves as cofactor.

It localises to the plastid. The protein localises to the chloroplast. The enzyme catalyses GTP + 4 H2O = 2,5-diamino-6-hydroxy-4-(5-phosphoribosylamino)-pyrimidine + formate + 2 phosphate + 3 H(+). The protein operates within cofactor biosynthesis; riboflavin biosynthesis; 5-amino-6-(D-ribitylamino)uracil from GTP: step 1/4. In terms of biological role, involved in riboflavin biosynthesis. Catalyzes the conversion of GTP to 2,5-diamino-6-ribosylamino-4(3H)-pyrimidinone 5'-phosphate (DARP), formate and pyrophosphate. This is Probable monofunctional riboflavin biosynthesis protein RIBA 3, chloroplastic (RIBA3) from Oryza sativa subsp. japonica (Rice).